The chain runs to 237 residues: Ribonuclease PH (237 aa).

Phosphate is bound by residues Arg86 and 124–126 (GTR).

The protein belongs to the RNase PH family. As to quaternary structure, homohexameric ring arranged as a trimer of dimers.

It catalyses the reaction tRNA(n+1) + phosphate = tRNA(n) + a ribonucleoside 5'-diphosphate. Phosphorolytic 3'-5' exoribonuclease that plays an important role in tRNA 3'-end maturation. Removes nucleotide residues following the 3'-CCA terminus of tRNAs; can also add nucleotides to the ends of RNA molecules by using nucleoside diphosphates as substrates, but this may not be physiologically important. Probably plays a role in initiation of 16S rRNA degradation (leading to ribosome degradation) during starvation. This chain is Ribonuclease PH, found in Shewanella sp. (strain W3-18-1).